A 186-amino-acid polypeptide reads, in one-letter code: Akirin-1A (186 aa).

The segment at 14 to 65 (EALMSPQSPKRRRCAPLPGSPATPSPQRCAIRPEMQQGQQQPLSQLGGDRRL) is disordered. Positions 49 to 60 (QQGQQQPLSQLG) are enriched in low complexity. Positions 183–186 (SYVS) match the SYVS motif motif.

This sequence belongs to the akirin family.

The protein localises to the nucleus. Molecular adapter that acts as a bridge between proteins, and which is involved skeletal muscle development. Functions as a signal transducer for MSTN during skeletal muscle regeneration and myogenesis. This is Akirin-1A (akirin1-a) from Xenopus laevis (African clawed frog).